An 87-amino-acid chain; its full sequence is Small ribosomal subunit protein uS17 (87 aa).

Belongs to the universal ribosomal protein uS17 family. As to quaternary structure, part of the 30S ribosomal subunit.

Functionally, one of the primary rRNA binding proteins, it binds specifically to the 5'-end of 16S ribosomal RNA. This Dichelobacter nodosus (strain VCS1703A) protein is Small ribosomal subunit protein uS17.